The primary structure comprises 297 residues: tRNA dimethylallyltransferase (297 aa).

15–22 (GPTASGKS) is a binding site for ATP. 17-22 (TASGKS) lines the substrate pocket. Interaction with substrate tRNA stretches follow at residues 40 to 43 (DSMQ) and 164 to 168 (QRIVR).

Belongs to the IPP transferase family. Monomer. Mg(2+) serves as cofactor.

It catalyses the reaction adenosine(37) in tRNA + dimethylallyl diphosphate = N(6)-dimethylallyladenosine(37) in tRNA + diphosphate. Catalyzes the transfer of a dimethylallyl group onto the adenine at position 37 in tRNAs that read codons beginning with uridine, leading to the formation of N6-(dimethylallyl)adenosine (i(6)A). This Rhizobium johnstonii (strain DSM 114642 / LMG 32736 / 3841) (Rhizobium leguminosarum bv. viciae) protein is tRNA dimethylallyltransferase.